A 912-amino-acid polypeptide reads, in one-letter code: MTKKPYFRLSIISCLLISCYVKAETQSIKDTKEAISSEVDTQSTEDSELETISVTAEKVRDRKDNEVTGLGKIIKTSESISREQVLNIRDLTRYDPGISVVEQGRGASSGYSIRGMDRNRVALLVDGLPQTQSYVVQSPLVARSGYSGTGAINEIEYENVKAVEISKGGSSSEYGNGALAGSVTFQSKSAADILEGDKSWGIQTKNAYSSKNKGFTHSLAVAGKQGGFEGLAIYTQRNSIETQVHKDALKGVQSYNRLIAKPENQSAYFVMEDECPKGYDECIPSAKPPAILSTKKETVSVSDYTGANRIKPNPMKYESQSWFLRGGYHFSEQHYIGGIFEFTQQKFDIRDMTFPAYLSPTEKGDLANRPFYPKQDYGAYQHIEDGRGVKYASGLYFDEHHRKQRVGIEYIYENKNKAGIIDKAVLSANQQNIILDSYMRHTHCSLYPNPSKNCRPTLDKPYSYYRSDRNVYKEKHNMLQLNLEKKIQQNWLTHQIVFNLGFDDFTSALQHKDYLTRRVIATADSISDKTGKTRRNGLREYPYLYPKPKPYFAGEDHCNYQGSSSNYRDCKVRLIKGKNYYFAARNNMALGKYVDLGLGIRYDVSRTKANESTISVGKFKNFSWNTGIVIKPTEWLDLSYRLSTGFRNPSFAEMYGWRYGGKNDEVYVGKFKPETSRNQEFGLALKGDFGNIEISHFSNAYRNLIAFAEELSKNGTGKGNYGYHNAQNAKLVGVNITAQLDFNGLWKRIPYGWYATFAYNRVKVKDQKINAGLASVSSYLFDAIQPSRYIIGLGYDHISNTWGVNATFTQSKAKSQNELLGKRALGNNSRDVKSTRKLTRAWHILDVSGYYMANKNIMLRLGIYNLFNYRYVTWEAVRQTAQGAVNQHQNVGNYTRYAASGRNYTLTLEMKF.

The N-terminal stretch at 1 to 23 (MTKKPYFRLSIISCLLISCYVKA) is a signal peptide. The TonB box motif lies at 50–57 (ETISVTAE). One can recognise a TBDR plug domain in the interval 63 to 188 (KDNEVTGLGK…LAGSVTFQSK (126 aa)). The 714-residue stretch at 199-912 (SWGIQTKNAY…NYTLTLEMKF (714 aa)) folds into the TBDR beta-barrel domain. The TonB C-terminal box signature appears at 895-912 (TRYAASGRNYTLTLEMKF).

The protein belongs to the TonB-dependent receptor family.

The protein resides in the cell outer membrane. Functionally, haemophilus acquires iron by extracting it from serum transferrin (TF) in its human host. Acts as a transferrin receptor and is required for transferrin utilization. This is Transferrin-binding protein A from Haemophilus influenzae (strain ATCC 51907 / DSM 11121 / KW20 / Rd).